The chain runs to 614 residues: Fem-3 mRNA-binding factor 1 (614 aa).

Positions 1-24 (MDQSKMRYTNQFRKTPQKPTSTEV) are enriched in polar residues. The interval 1-34 (MDQSKMRYTNQFRKTPQKPTSTEVGNHHTPAHSP) is disordered. One can recognise a PUM-HD domain in the interval 160–564 (TRSNNVLPTW…KMIETLAHLR (405 aa)). Pumilio repeat units follow at residues 185–223 (EVLD…QLFE), 224–263 (QVIG…NIKR), 269–305 (NFIS…KLVQ), 306–342 (ALPR…EFIV), 343–382 (DFVA…DLTS), 398–434 (SVTN…CIIE), 436–471 (CLMR…EMMD), and 483–519 (TGKD…RQTK). The tract at residues 283–614 (FACRVIQSSL…NLRLMRTFSP (332 aa)) is binding to gld-3 isoform A.

Interacts (via C-terminus) with gld-3 isoform A in an RNA-independent manner. Expressed specifically in the germline (at protein level).

The protein resides in the cytoplasm. In terms of biological role, RNA-binding protein that binds to the consensus sequence 5'-UGUGCCAUA-3' in mRNA 3'-UTRs. Involved in the control of stem cells and sex determination in the C.elegans hermaphrodite germline. May also play a role in the hermaphrodite germline proliferation and oogenesis. Binds specifically to the regulatory region of fem-3 3'-UTR and mediates the sperm/oocyte switch. Negatively regulates gld-3 expression, possibly by directly binding to two sites within the 3'-UTR of gld-3 isoform b. In association with the cye-1/cdk-2 complex, negatively regulates gld-1 expression in the distal germline cells of the mitotic zone. By binding to the 3'-UTR, represses phosphatase lip-1 expression in the distal part of the germline mitotic zone. Suppresses germline tumor formation by preventing the dedifferentiation of secondary spermatocytes. This chain is Fem-3 mRNA-binding factor 1 (fbf-1), found in Caenorhabditis elegans.